Here is a 491-residue protein sequence, read N- to C-terminus: Probable glycine dehydrogenase (decarboxylating) subunit 2 (491 aa).

K264 bears the N6-(pyridoxal phosphate)lysine mark.

It belongs to the GcvP family. C-terminal subunit subfamily. The glycine cleavage system is composed of four proteins: P, T, L and H. In this organism, the P 'protein' is a heterodimer of two subunits. It depends on pyridoxal 5'-phosphate as a cofactor.

It catalyses the reaction N(6)-[(R)-lipoyl]-L-lysyl-[glycine-cleavage complex H protein] + glycine + H(+) = N(6)-[(R)-S(8)-aminomethyldihydrolipoyl]-L-lysyl-[glycine-cleavage complex H protein] + CO2. In terms of biological role, the glycine cleavage system catalyzes the degradation of glycine. The P protein binds the alpha-amino group of glycine through its pyridoxal phosphate cofactor; CO(2) is released and the remaining methylamine moiety is then transferred to the lipoamide cofactor of the H protein. The polypeptide is Probable glycine dehydrogenase (decarboxylating) subunit 2 (Coxiella burnetii (strain CbuG_Q212) (Coxiella burnetii (strain Q212))).